A 448-amino-acid chain; its full sequence is Elongation factor 1-alpha (448 aa).

Residues 5–230 (KIHISIVVIG…DQINEPKRPS (226 aa)) form the tr-type G domain. The interval 14 to 21 (GHVDSGKS) is G1. Position 14–21 (14–21 (GHVDSGKS)) interacts with GTP. Lys-55 carries the post-translational modification N6,N6-dimethyllysine. The tract at residues 70-74 (GITID) is G2. Lys-79 carries the post-translational modification N6,N6,N6-trimethyllysine. The interval 91-94 (DAPG) is G3. GTP contacts are provided by residues 91–95 (DAPGH) and 153–156 (NKMD). A G4 region spans residues 153-156 (NKMD). The residue at position 187 (Lys-187) is an N6,N6,N6-trimethyllysine. A G5 region spans residues 194–196 (SGF). Lys-261 carries the post-translational modification N6-methyllysine. The residue at position 289 (Glu-289) is a 5-glutamyl glycerylphosphorylethanolamine. Lys-306 is modified (N6,N6,N6-trimethyllysine). At Glu-362 the chain carries 5-glutamyl glycerylphosphorylethanolamine. Lys-396 is modified (N6,N6,N6-trimethyllysine).

Belongs to the TRAFAC class translation factor GTPase superfamily. Classic translation factor GTPase family. EF-Tu/EF-1A subfamily.

The protein localises to the cytoplasm. Its function is as follows. This protein promotes the GTP-dependent binding of aminoacyl-tRNA to the A-site of ribosomes during protein biosynthesis. In Solanum lycopersicum (Tomato), this protein is Elongation factor 1-alpha.